Reading from the N-terminus, the 390-residue chain is Glutamate 5-kinase (390 aa).

Lys29 contacts ATP. Substrate contacts are provided by Ser69, Asp156, and Asn168. 188–189 (TD) contributes to the ATP binding site. The PUA domain maps to 295–374 (SGSLIVDAGA…EQFDRILGNN (80 aa)).

This sequence belongs to the glutamate 5-kinase family.

The protein resides in the cytoplasm. The catalysed reaction is L-glutamate + ATP = L-glutamyl 5-phosphate + ADP. Its pathway is amino-acid biosynthesis; L-proline biosynthesis; L-glutamate 5-semialdehyde from L-glutamate: step 1/2. In terms of biological role, catalyzes the transfer of a phosphate group to glutamate to form L-glutamate 5-phosphate. The protein is Glutamate 5-kinase of Psychrobacter cryohalolentis (strain ATCC BAA-1226 / DSM 17306 / VKM B-2378 / K5).